The following is a 122-amino-acid chain: S-adenosylmethionine decarboxylase proenzyme (122 aa).

The active-site Schiff-base intermediate with substrate; via pyruvic acid is S63. At S63 the chain carries Pyruvic acid (Ser); by autocatalysis. H68 (proton acceptor; for processing activity) is an active-site residue. The active-site Proton donor; for catalytic activity is the C83.

This sequence belongs to the prokaryotic AdoMetDC family. Type 1 subfamily. Heterotetramer of two alpha and two beta chains arranged as a dimer of alpha/beta heterodimers. Pyruvate is required as a cofactor. Is synthesized initially as an inactive proenzyme. Formation of the active enzyme involves a self-maturation process in which the active site pyruvoyl group is generated from an internal serine residue via an autocatalytic post-translational modification. Two non-identical subunits are generated from the proenzyme in this reaction, and the pyruvate is formed at the N-terminus of the alpha chain, which is derived from the carboxyl end of the proenzyme. The post-translation cleavage follows an unusual pathway, termed non-hydrolytic serinolysis, in which the side chain hydroxyl group of the serine supplies its oxygen atom to form the C-terminus of the beta chain, while the remainder of the serine residue undergoes an oxidative deamination to produce ammonia and the pyruvoyl group blocking the N-terminus of the alpha chain.

It carries out the reaction S-adenosyl-L-methionine + H(+) = S-adenosyl 3-(methylsulfanyl)propylamine + CO2. Its pathway is amine and polyamine biosynthesis; S-adenosylmethioninamine biosynthesis; S-adenosylmethioninamine from S-adenosyl-L-methionine: step 1/1. Catalyzes the decarboxylation of S-adenosylmethionine to S-adenosylmethioninamine (dcAdoMet), the propylamine donor required for the synthesis of the polyamines spermine and spermidine from the diamine putrescine. This is S-adenosylmethionine decarboxylase proenzyme from Methanococcus maripaludis (strain C5 / ATCC BAA-1333).